The sequence spans 668 residues: Echinocandin B biosynthetic cluster protein J (668 aa).

Disordered stretches follow at residues 1–20 (MHFA…DQSL), 92–113 (YTPP…PPTP), 224–322 (PLDH…QSAD), 330–349 (EVAE…SIPT), and 483–506 (NCSS…PPLK). The segment covering 96–106 (SLDSRSSATPP) has biased composition (polar residues). A compositionally biased stretch (pro residues) spans 264-275 (NPEPGTPTPPSP). Residues 311-322 (YRSTPSPCQSAD) are compositionally biased toward polar residues. Residues 484–494 (CSSSSCSSSAS) show a composition bias toward low complexity. Basic and acidic residues predominate over residues 495 to 505 (KKNEEKREPPL).

The protein operates within antifungal biosynthesis. Functionally, part of the gene cluster that mediates the biosynthesis of echinocandin B, a fungal lipidated cyclic hexapeptide that acts as an antifungal agent. Linoleoyl-AMP, produced by the fatty-acyl-AMP ligase ecdI, is transferred to the initiation carrier domain (T0) of ecdA. The linoleoyl-S-phosphopantetheinyl-T0 is sequentially extended with L-ornithine, L-threonine, L-proline, L-homotyrosine, L-threonine, and 4R-methyl-L-proline to form the linear hexapeptide. Thereafter, the terminal condensation (C7) performs macrocyclization of the NRPS product and the cyclic scaffold is released from ecdA. All six of the amino acid residues are hydroxylated, including 4R,5R-dihydroxy-L-ornithine, 4R-hydroxyl-L-proline, 3S,4S-dihydroxy-L-homotyrosine, and 3S-hydroxyl-4S-methyl-L-prolin. In the pathway, all the hydroxylation reactions are proposed to occur following completion of the cyclic peptide, so the unhydroxylated precursor produced by ecdA will undergo six rounds of hydroxylation. Five hydroxylase genes (ecdG, ecdH, ecdK, htyE and htyF) are embedded within the echinocandin B (ecd) and L-homotyrosine (hty) clusters. The sequence is that of Echinocandin B biosynthetic cluster protein J from Aspergillus rugulosus (Emericella rugulosa).